The chain runs to 248 residues: Probable transcriptional regulatory protein BBta_6910 (248 aa).

Belongs to the TACO1 family.

Its subcellular location is the cytoplasm. The polypeptide is Probable transcriptional regulatory protein BBta_6910 (Bradyrhizobium sp. (strain BTAi1 / ATCC BAA-1182)).